The primary structure comprises 222 residues: Thymidylate kinase (222 aa).

Residue 10–17 participates in ATP binding; the sequence is GLEGAGKS.

It belongs to the thymidylate kinase family.

It carries out the reaction dTMP + ATP = dTDP + ADP. Phosphorylation of dTMP to form dTDP in both de novo and salvage pathways of dTTP synthesis. The protein is Thymidylate kinase of Alteromonas mediterranea (strain DSM 17117 / CIP 110805 / LMG 28347 / Deep ecotype).